Reading from the N-terminus, the 388-residue chain is Queuine tRNA-ribosyltransferase (388 aa).

Residue Asp91 is the Proton acceptor of the active site. Residues 91–95 (DSGGY), Asp145, Gln190, and Gly217 contribute to the substrate site. An RNA binding region spans residues 248–254 (GVGAPED). Asp267 (nucleophile) is an active-site residue. The interval 272–276 (TRLAR) is RNA binding; important for wobble base 34 recognition. Residues Cys305, Cys307, Cys310, and His336 each contribute to the Zn(2+) site.

It belongs to the queuine tRNA-ribosyltransferase family. As to quaternary structure, homodimer. Within each dimer, one monomer is responsible for RNA recognition and catalysis, while the other monomer binds to the replacement base PreQ1. Zn(2+) is required as a cofactor.

The enzyme catalyses 7-aminomethyl-7-carbaguanine + guanosine(34) in tRNA = 7-aminomethyl-7-carbaguanosine(34) in tRNA + guanine. It functions in the pathway tRNA modification; tRNA-queuosine biosynthesis. Its function is as follows. Catalyzes the base-exchange of a guanine (G) residue with the queuine precursor 7-aminomethyl-7-deazaguanine (PreQ1) at position 34 (anticodon wobble position) in tRNAs with GU(N) anticodons (tRNA-Asp, -Asn, -His and -Tyr). Catalysis occurs through a double-displacement mechanism. The nucleophile active site attacks the C1' of nucleotide 34 to detach the guanine base from the RNA, forming a covalent enzyme-RNA intermediate. The proton acceptor active site deprotonates the incoming PreQ1, allowing a nucleophilic attack on the C1' of the ribose to form the product. After dissociation, two additional enzymatic reactions on the tRNA convert PreQ1 to queuine (Q), resulting in the hypermodified nucleoside queuosine (7-(((4,5-cis-dihydroxy-2-cyclopenten-1-yl)amino)methyl)-7-deazaguanosine). The chain is Queuine tRNA-ribosyltransferase from Dictyoglomus turgidum (strain DSM 6724 / Z-1310).